The sequence spans 603 residues: Probable potassium transport system protein Kup (603 aa).

The next 12 membrane-spanning stretches (helical) occupy residues 15-35 (GLVF…IFLL), 43-63 (IIGV…VEYA), 94-114 (VAFV…DGVI), 135-155 (NIGQ…LFSV), 163-183 (ITWV…FSGI), 209-229 (GIIG…GEAL), 244-264 (AWRF…AFLI), 283-303 (ILYI…SQAM), 336-356 (IYIS…MLIF), 365-385 (AYGL…TSIF), 390-410 (NITK…FLLS), and 415-435 (IPHG…LILI).

This sequence belongs to the HAK/KUP transporter (TC 2.A.72) family.

It localises to the cell membrane. The catalysed reaction is K(+)(in) + H(+)(in) = K(+)(out) + H(+)(out). Its function is as follows. Transport of potassium into the cell. Likely operates as a K(+):H(+) symporter. The chain is Probable potassium transport system protein Kup from Methanosarcina barkeri (strain Fusaro / DSM 804).